Here is a 73-residue protein sequence, read N- to C-terminus: Large ribosomal subunit protein bL31 (73 aa).

The protein belongs to the bacterial ribosomal protein bL31 family. Type A subfamily. Part of the 50S ribosomal subunit.

Functionally, binds the 23S rRNA. The chain is Large ribosomal subunit protein bL31 from Rhizobium rhizogenes (strain K84 / ATCC BAA-868) (Agrobacterium radiobacter).